A 119-amino-acid polypeptide reads, in one-letter code: Beta-2-microglobulin (119 aa).

The N-terminal stretch at 1-20 (MSRSVALAVLALLSLSGLEA) is a signal peptide. Positions 25-113 (PKIQVYSRHP…HVTLSQPKIV (89 aa)) constitute an Ig-like C1-type domain. The cysteines at positions 45 and 100 are disulfide-linked.

The protein belongs to the beta-2-microglobulin family. In terms of assembly, heterodimer of an alpha chain and a beta chain. Beta-2-microglobulin is the beta-chain of major histocompatibility complex class I molecules. Forms a heterotrimer with MR1 and a metabolite antigen.

The protein localises to the secreted. In terms of biological role, component of the class I major histocompatibility complex (MHC). Involved in the presentation of peptide antigens to the immune system. The chain is Beta-2-microglobulin (B2M) from Pan troglodytes (Chimpanzee).